We begin with the raw amino-acid sequence, 195 residues long: Probable chorismate pyruvate-lyase (195 aa).

Residues arginine 79, leucine 117, and glutamate 180 each coordinate substrate.

It belongs to the UbiC family.

It is found in the cytoplasm. It catalyses the reaction chorismate = 4-hydroxybenzoate + pyruvate. Its pathway is cofactor biosynthesis; ubiquinone biosynthesis. Functionally, removes the pyruvyl group from chorismate, with concomitant aromatization of the ring, to provide 4-hydroxybenzoate (4HB) for the ubiquinone pathway. The chain is Probable chorismate pyruvate-lyase from Ralstonia nicotianae (strain ATCC BAA-1114 / GMI1000) (Ralstonia solanacearum).